A 430-amino-acid polypeptide reads, in one-letter code: Tol-Pal system protein TolB (430 aa).

Positions 1–21 (MKQALRVAFGFLILWASVLHA) are cleaved as a signal peptide.

The protein belongs to the TolB family. In terms of assembly, the Tol-Pal system is composed of five core proteins: the inner membrane proteins TolA, TolQ and TolR, the periplasmic protein TolB and the outer membrane protein Pal. They form a network linking the inner and outer membranes and the peptidoglycan layer.

It localises to the periplasm. Part of the Tol-Pal system, which plays a role in outer membrane invagination during cell division and is important for maintaining outer membrane integrity. TolB occupies a key intermediary position in the Tol-Pal system because it communicates directly with both membrane-embedded components, Pal in the outer membrane and TolA in the inner membrane. In Shigella dysenteriae serotype 1 (strain Sd197), this protein is Tol-Pal system protein TolB.